The following is a 650-amino-acid chain: Gamma-tubulin complex component 4 homolog (650 aa).

Ser-214 bears the Phosphoserine mark. Position 216 is a phosphothreonine (Thr-216). A Phosphoserine modification is found at Ser-218.

Belongs to the TUBGCP family.

It is found in the cytoplasm. The protein resides in the cytoskeleton. It localises to the microtubule organizing center. Its subcellular location is the centrosome. In terms of biological role, gamma-tubulin complex is necessary for microtubule nucleation at the centrosome. In Drosophila melanogaster (Fruit fly), this protein is Gamma-tubulin complex component 4 homolog (Grip75).